Here is a 444-residue protein sequence, read N- to C-terminus: Coagulation factor VII (444 aa).

Positions 1 to 21 are cleaved as a signal peptide; that stretch reads MAPQARGLGLCSLLALQASLA. The propeptide occupies 22–39; the sequence is AVFITQEEAHSVLRRQRR. The Gla domain occupies 40 to 84; the sequence is ANSFLEELRPGSLERECKEELCSFEEAREVFQSTERTKQFWITYN. E45, E46, E53, E55, E58, E59, E64, E65, E68, and E74 each carry 4-carboxyglutamate. A disulfide bridge connects residues C56 and C61. In terms of domain architecture, EGF-like 1; calcium-binding spans 85–121; it reads DGDQCASNPCQNGGSCEDQIQSYICFCLADFEGRNCE. 9 disulfides stabilise this stretch: C89/C100, C94/C109, C111/C120, C130/C141, C137/C151, C153/C166, C174/C301, C198/C203, and C217/C233. An O-linked (Glc...) serine; alternate glycan is attached at S91. The O-linked (Xyl...) serine; alternate glycan is linked to S91. A glycan (O-linked (Fuc) serine) is linked at S99. At D102 the chain carries (3R)-3-hydroxyaspartate. The EGF-like 2 domain occupies 126 to 167; sequence DQLICMYENGGCEQYCSDHVGSQRSCRCHEGYTLLPNGVSCT. The Peptidase S1 domain occupies 192–431; sequence IVGGKVCPKG…YTEWLSRLMR (240 aa). N-linked (GlcNAc...) asparagine glycosylation occurs at N211. The active-site Charge relay system is the H232. An N-linked (GlcNAc...) asparagine glycan is attached at N242. The Charge relay system role is filled by D281. A glycan (N-linked (GlcNAc...) asparagine) is linked at N306. C349 and C368 form a disulfide bridge. Substrate is bound at residue D377. A disulfide bridge connects residues C379 and C407. Residue S383 is the Charge relay system of the active site.

Belongs to the peptidase S1 family. In terms of assembly, heterodimer of a light chain and a heavy chain linked by a disulfide bond. The vitamin K-dependent, enzymatic carboxylation of some glutamate residues allows the modified protein to bind calcium. Post-translationally, the iron and 2-oxoglutarate dependent 3-hydroxylation of aspartate and asparagine is (R) stereospecific within EGF domains. In terms of processing, O-glycosylated. O-fucosylated by POFUT1 on a conserved serine or threonine residue found in the consensus sequence C2-X(4,5)-[S/T]-C3 of EGF domains, where C2 and C3 are the second and third conserved cysteines. Can be either O-glucosylated or O-xylosylated at Ser-91 by POGLUT1. In terms of tissue distribution, plasma.

The protein resides in the secreted. The catalysed reaction is Selective cleavage of Arg-|-Ile bond in factor X to form factor Xa.. Its function is as follows. Initiates the extrinsic pathway of blood coagulation. Serine protease that circulates in the blood in a zymogen form. Factor VII is converted to factor VIIa by factor Xa, factor XIIa, factor IXa, or thrombin by minor proteolysis. In the presence of tissue factor and calcium ions, factor VIIa then converts factor X to factor Xa by limited proteolysis. Factor VIIa also converts factor IX to factor IXa in the presence of tissue factor and calcium. The chain is Coagulation factor VII (F7) from Oryctolagus cuniculus (Rabbit).